A 344-amino-acid chain; its full sequence is Dihydroorotate dehydrogenase (quinone) (344 aa).

FMN is bound by residues A65–K69 and T89. Position 69 (K69) interacts with substrate. Substrate is bound at residue N114–F118. 2 residues coordinate FMN: N145 and N178. A substrate-binding site is contributed by N178. The active-site Nucleophile is S181. Position 183 (N183) interacts with substrate. FMN contacts are provided by K215 and T243. Residue N244–T245 coordinates substrate. FMN is bound by residues G269, G298, and Y319–T320.

It belongs to the dihydroorotate dehydrogenase family. Type 2 subfamily. In terms of assembly, monomer. The cofactor is FMN.

It is found in the cell membrane. It carries out the reaction (S)-dihydroorotate + a quinone = orotate + a quinol. It participates in pyrimidine metabolism; UMP biosynthesis via de novo pathway; orotate from (S)-dihydroorotate (quinone route): step 1/1. In terms of biological role, catalyzes the conversion of dihydroorotate to orotate with quinone as electron acceptor. This is Dihydroorotate dehydrogenase (quinone) from Clavibacter sepedonicus (Clavibacter michiganensis subsp. sepedonicus).